The chain runs to 200 residues: NADH-quinone oxidoreductase subunit C (200 aa).

Belongs to the complex I 30 kDa subunit family. NDH-1 is composed of 14 different subunits. Subunits NuoB, C, D, E, F, and G constitute the peripheral sector of the complex.

The protein resides in the cell inner membrane. It catalyses the reaction a quinone + NADH + 5 H(+)(in) = a quinol + NAD(+) + 4 H(+)(out). NDH-1 shuttles electrons from NADH, via FMN and iron-sulfur (Fe-S) centers, to quinones in the respiratory chain. The immediate electron acceptor for the enzyme in this species is believed to be ubiquinone. Couples the redox reaction to proton translocation (for every two electrons transferred, four hydrogen ions are translocated across the cytoplasmic membrane), and thus conserves the redox energy in a proton gradient. The chain is NADH-quinone oxidoreductase subunit C from Burkholderia thailandensis (strain ATCC 700388 / DSM 13276 / CCUG 48851 / CIP 106301 / E264).